The following is a 397-amino-acid chain: Ubiquitin-like modifier-activating enzyme 5 (397 aa).

5 residues coordinate ATP: glycine 76, aspartate 97, lysine 120, asparagine 143, and asparagine 177. 2 residues coordinate Zn(2+): cysteine 219 and cysteine 222. The active-site Glycyl thioester intermediate is cysteine 243. The Zn(2+) site is built by cysteine 296 and cysteine 301. A disordered region spans residues 362–384; it reads LAYEPPASTKHSETTSTTAVSDD. Residues 375–384 show a composition bias toward low complexity; it reads TTSTTAVSDD.

Belongs to the ubiquitin-activating E1 family. UBA5 subfamily.

Functionally, E1-like enzyme which activates UFM1. In Aedes aegypti (Yellowfever mosquito), this protein is Ubiquitin-like modifier-activating enzyme 5.